We begin with the raw amino-acid sequence, 251 residues long: Glucosamine-6-phosphate deaminase (251 aa).

The active-site Proton acceptor; for enolization step is Asp-73. Residue Asn-142 is the For ring-opening step of the active site. His-144 acts as the Proton acceptor; for ring-opening step in catalysis. The active-site For ring-opening step is Glu-149.

It belongs to the glucosamine/galactosamine-6-phosphate isomerase family. NagB subfamily.

It catalyses the reaction alpha-D-glucosamine 6-phosphate + H2O = beta-D-fructose 6-phosphate + NH4(+). It functions in the pathway amino-sugar metabolism; N-acetylneuraminate degradation; D-fructose 6-phosphate from N-acetylneuraminate: step 5/5. Functionally, catalyzes the reversible isomerization-deamination of glucosamine 6-phosphate (GlcN6P) to form fructose 6-phosphate (Fru6P) and ammonium ion. The chain is Glucosamine-6-phosphate deaminase from Rhodopirellula baltica (strain DSM 10527 / NCIMB 13988 / SH1).